The chain runs to 689 residues: Glycine--tRNA ligase beta subunit (689 aa).

It belongs to the class-II aminoacyl-tRNA synthetase family. Tetramer of two alpha and two beta subunits.

It localises to the cytoplasm. The catalysed reaction is tRNA(Gly) + glycine + ATP = glycyl-tRNA(Gly) + AMP + diphosphate. The chain is Glycine--tRNA ligase beta subunit from Salmonella choleraesuis (strain SC-B67).